Here is a 251-residue protein sequence, read N- to C-terminus: UPF0309 protein GK1441 (251 aa).

Residues 31–214 form the SIS domain; that stretch reads VSEAIQNGGI…VLMAENGIEP (184 aa).

Belongs to the UPF0309 family.

The sequence is that of UPF0309 protein GK1441 from Geobacillus kaustophilus (strain HTA426).